Consider the following 345-residue polypeptide: Transcription initiation factor IIB (345 aa).

Residues 20-53 (IVLTCPECKVYPPKIVERFSEGDVVCALCGLVLS) form a TFIIB-type zinc finger. Zn(2+) contacts are provided by Cys-24, Cys-27, Cys-45, and Cys-48. Over residues 65–78 (TFSNDDHNGDDPSR) the composition is skewed to basic and acidic residues. The interval 65–93 (TFSNDDHNGDDPSRVGEASNPLLDGNNLS) is disordered. 2 tandem repeats follow at residues 136–212 (LCDA…IMKN) and 242–318 (FCSH…ILYE).

Belongs to the TFIIB family. As to quaternary structure, associates with TFIID-IIA (DA complex) to form TFIID-IIA-IIB (DAB-complex) which is then recognized by polymerase II.

Its subcellular location is the nucleus. Its function is as follows. General factor that plays a major role in the activation of eukaryotic genes transcribed by RNA polymerase II. This Saccharomyces cerevisiae (strain ATCC 204508 / S288c) (Baker's yeast) protein is Transcription initiation factor IIB (SUA7).